The chain runs to 749 residues: Transcription factor RFX3 (749 aa).

Positions 183 to 258 (HLQWLLDNYE…YHYYGIRVKP (76 aa)) form a DNA-binding region, RFX-type winged-helix. Residues 663-699 (VSPGNLDKDEGSEVESEMDEELDDSSEPQAKREKTEL) form a disordered region. Positions 674-688 (SEVESEMDEELDDSS) are enriched in acidic residues.

Belongs to the RFX family. Heterodimer; heterodimerizes with RFX1 and RFX2, and RFX6.

Its subcellular location is the nucleus. Its function is as follows. Transcription factor required for ciliogenesis and islet cell differentiation during endocrine pancreas development. Essential for the differentiation of nodal monocilia and left-right asymmetry specification during embryogenesis. Required for the biogenesis of motile cilia by governing growth and beating efficiency of motile cells. Also required for ciliated ependymal cell differentiation. Regulates the expression of genes involved in ciliary assembly (DYNC2LI1, FOXJ1 and BBS4) and genes involved in ciliary motility (DNAH11, DNAH9 and DNAH5). Together with RFX6, participates in the differentiation of 4 of the 5 islet cell types during endocrine pancreas development, with the exception of pancreatic PP (polypeptide-producing) cells. Regulates transcription by forming a heterodimer with another RFX protein and binding to the X-box in the promoter of target genes. Represses transcription of MAP1A in non-neuronal cells but not in neuronal cells. The polypeptide is Transcription factor RFX3 (RFX3) (Homo sapiens (Human)).